We begin with the raw amino-acid sequence, 219 residues long: UPF0073 inner membrane protein YqfA (219 aa).

Residues 1 to 23 (MVQKPLIKQGYSLAEEIANSVSH) are Cytoplasmic-facing. Residues 24–44 (GIGLVFGIVGLVLLLVQAVDL) form a helical membrane-spanning segment. Residues 45–53 (NASATAITS) lie on the Periplasmic side of the membrane. The helical transmembrane segment at 54–74 (YSLYGGSMILLFLASTLYHAI) threads the bilayer. Residues 75 to 90 (PHQRAKMWLKKFDHCA) are Cytoplasmic-facing. Residues 91 to 111 (IYLLIAGTYTPFLLVGLDSPL) form a helical membrane-spanning segment. Over 112–113 (AR) the chain is Periplasmic. The chain crosses the membrane as a helical span at residues 114-134 (GLMIVIWSLALLGILFKLTIA). At 135–138 (HRFK) the chain is on the cytoplasmic side. Residues 139–159 (ILSLVTYLAMGWLSLVVIYEM) traverse the membrane as a helical segment. Residues 160 to 165 (AVKLAA) lie on the Periplasmic side of the membrane. Residues 166–186 (GSVTLLAVGGVVYSLGVIFYV) form a helical membrane-spanning segment. Over 187 to 195 (CKRIPYNHA) the chain is Cytoplasmic. Residues 196-216 (IWHGFVLGGSVCHFLAIYLYI) traverse the membrane as a helical segment. At 217–219 (GQA) the chain is on the periplasmic side.

The protein belongs to the UPF0073 (Hly-III) family.

The protein localises to the cell inner membrane. The polypeptide is UPF0073 inner membrane protein YqfA (yqfA) (Escherichia coli O157:H7).